The sequence spans 471 residues: Uronate isomerase (471 aa).

This sequence belongs to the metallo-dependent hydrolases superfamily. Uronate isomerase family.

It catalyses the reaction D-glucuronate = D-fructuronate. It carries out the reaction aldehydo-D-galacturonate = keto-D-tagaturonate. Its pathway is carbohydrate metabolism; pentose and glucuronate interconversion. This chain is Uronate isomerase, found in Latilactobacillus sakei subsp. sakei (strain 23K) (Lactobacillus sakei subsp. sakei).